A 315-amino-acid polypeptide reads, in one-letter code: DNA-directed RNA polymerase subunit alpha (315 aa).

The tract at residues 1-228 is alpha N-terminal domain (alpha-NTD); the sequence is MAQFQIECVE…DLFNPLKDIS (228 aa). The interval 243–315 is alpha C-terminal domain (alpha-CTD); it reads TAQIPIEELQ…LPQERSSKHN (73 aa).

The protein belongs to the RNA polymerase alpha chain family. In terms of assembly, homodimer. In cyanobacteria the RNAP catalytic core is composed of 2 alpha, 1 beta, 1 beta', 1 gamma and 1 omega subunit. When a sigma factor is associated with the core the holoenzyme is formed, which can initiate transcription.

It carries out the reaction RNA(n) + a ribonucleoside 5'-triphosphate = RNA(n+1) + diphosphate. DNA-dependent RNA polymerase catalyzes the transcription of DNA into RNA using the four ribonucleoside triphosphates as substrates. The polypeptide is DNA-directed RNA polymerase subunit alpha (Nostoc sp. (strain PCC 7120 / SAG 25.82 / UTEX 2576)).